A 145-amino-acid polypeptide reads, in one-letter code: D-aminoacyl-tRNA deacylase (145 aa).

The Gly-cisPro motif, important for rejection of L-amino acids signature appears at 137 to 138 (GP).

This sequence belongs to the DTD family. In terms of assembly, homodimer.

It is found in the cytoplasm. It catalyses the reaction glycyl-tRNA(Ala) + H2O = tRNA(Ala) + glycine + H(+). The enzyme catalyses a D-aminoacyl-tRNA + H2O = a tRNA + a D-alpha-amino acid + H(+). Its function is as follows. An aminoacyl-tRNA editing enzyme that deacylates mischarged D-aminoacyl-tRNAs. Also deacylates mischarged glycyl-tRNA(Ala), protecting cells against glycine mischarging by AlaRS. Acts via tRNA-based rather than protein-based catalysis; rejects L-amino acids rather than detecting D-amino acids in the active site. By recycling D-aminoacyl-tRNA to D-amino acids and free tRNA molecules, this enzyme counteracts the toxicity associated with the formation of D-aminoacyl-tRNA entities in vivo and helps enforce protein L-homochirality. This chain is D-aminoacyl-tRNA deacylase, found in Pseudoalteromonas translucida (strain TAC 125).